Consider the following 1486-residue polypeptide: Chromosome partition protein MukB (1486 aa).

34-41 (GGNGAGKS) provides a ligand contact to ATP. 3 coiled-coil regions span residues 326-418 (LEAD…QYNQ), 444-480 (LETF…QAYQ), and 509-603 (RHLA…RAPV). Positions 666–783 (PGGSEDQRLN…EVPLFGRAAR (118 aa)) are flexible hinge. Coiled-coil stretches lie at residues 835 to 923 (EAEI…AKLE), 977 to 1115 (EMLS…TAKA), and 1209 to 1266 (VEAI…QNVS).

The protein belongs to the SMC family. MukB subfamily. As to quaternary structure, homodimerization via its hinge domain. Binds to DNA via its C-terminal region. Interacts, and probably forms a ternary complex, with MukE and MukF via its C-terminal region. The complex formation is stimulated by calcium or magnesium. Interacts with tubulin-related protein FtsZ.

It localises to the cytoplasm. It is found in the nucleoid. Its function is as follows. Plays a central role in chromosome condensation, segregation and cell cycle progression. Functions as a homodimer, which is essential for chromosome partition. Involved in negative DNA supercoiling in vivo, and by this means organize and compact chromosomes. May achieve or facilitate chromosome segregation by condensation DNA from both sides of a centrally located replisome during cell division. The chain is Chromosome partition protein MukB from Escherichia coli O127:H6 (strain E2348/69 / EPEC).